A 456-amino-acid chain; its full sequence is Nitrogenase molybdenum-iron protein beta chain (456 aa).

Positions 23, 48, 106, and 141 each coordinate [8Fe-7S] cluster.

It belongs to the NifD/NifK/NifE/NifN family. In terms of assembly, tetramer of two alpha and two beta chains. Forms complex with the iron protein (nitrogenase component 2). The cofactor is [8Fe-7S] cluster.

It carries out the reaction N2 + 8 reduced [2Fe-2S]-[ferredoxin] + 16 ATP + 16 H2O = H2 + 8 oxidized [2Fe-2S]-[ferredoxin] + 2 NH4(+) + 16 ADP + 16 phosphate + 6 H(+). This molybdenum-iron protein is part of the nitrogenase complex that catalyzes the key enzymatic reactions in nitrogen fixation. The polypeptide is Nitrogenase molybdenum-iron protein beta chain (nifK2) (Methanosarcina barkeri).